A 503-amino-acid chain; its full sequence is UDP-N-acetylmuramoylalanine--D-glutamate ligase (503 aa).

129 to 135 is an ATP binding site; it reads GTNGKTT. The interval 284–305 is disordered; the sequence is DSEAEGEGKPRRRKADATAQEA.

This sequence belongs to the MurCDEF family.

Its subcellular location is the cytoplasm. The enzyme catalyses UDP-N-acetyl-alpha-D-muramoyl-L-alanine + D-glutamate + ATP = UDP-N-acetyl-alpha-D-muramoyl-L-alanyl-D-glutamate + ADP + phosphate + H(+). The protein operates within cell wall biogenesis; peptidoglycan biosynthesis. Functionally, cell wall formation. Catalyzes the addition of glutamate to the nucleotide precursor UDP-N-acetylmuramoyl-L-alanine (UMA). The polypeptide is UDP-N-acetylmuramoylalanine--D-glutamate ligase (Cupriavidus pinatubonensis (strain JMP 134 / LMG 1197) (Cupriavidus necator (strain JMP 134))).